The following is a 127-amino-acid chain: Aspartate 1-decarboxylase (127 aa).

Ser-25 functions as the Schiff-base intermediate with substrate; via pyruvic acid in the catalytic mechanism. At Ser-25 the chain carries Pyruvic acid (Ser). Thr-57 lines the substrate pocket. Tyr-58 acts as the Proton donor in catalysis. 73-75 lines the substrate pocket; sequence GAA.

Belongs to the PanD family. In terms of assembly, heterooctamer of four alpha and four beta subunits. The cofactor is pyruvate. In terms of processing, is synthesized initially as an inactive proenzyme, which is activated by self-cleavage at a specific serine bond to produce a beta-subunit with a hydroxyl group at its C-terminus and an alpha-subunit with a pyruvoyl group at its N-terminus.

The protein localises to the cytoplasm. The enzyme catalyses L-aspartate + H(+) = beta-alanine + CO2. Its pathway is cofactor biosynthesis; (R)-pantothenate biosynthesis; beta-alanine from L-aspartate: step 1/1. Its function is as follows. Catalyzes the pyruvoyl-dependent decarboxylation of aspartate to produce beta-alanine. This chain is Aspartate 1-decarboxylase, found in Clostridium botulinum (strain Loch Maree / Type A3).